Consider the following 570-residue polypeptide: Proline--tRNA ligase (570 aa).

It belongs to the class-II aminoacyl-tRNA synthetase family. ProS type 1 subfamily. As to quaternary structure, homodimer.

The protein localises to the cytoplasm. It carries out the reaction tRNA(Pro) + L-proline + ATP = L-prolyl-tRNA(Pro) + AMP + diphosphate. Catalyzes the attachment of proline to tRNA(Pro) in a two-step reaction: proline is first activated by ATP to form Pro-AMP and then transferred to the acceptor end of tRNA(Pro). As ProRS can inadvertently accommodate and process non-cognate amino acids such as alanine and cysteine, to avoid such errors it has two additional distinct editing activities against alanine. One activity is designated as 'pretransfer' editing and involves the tRNA(Pro)-independent hydrolysis of activated Ala-AMP. The other activity is designated 'posttransfer' editing and involves deacylation of mischarged Ala-tRNA(Pro). The misacylated Cys-tRNA(Pro) is not edited by ProRS. The polypeptide is Proline--tRNA ligase (Geobacter metallireducens (strain ATCC 53774 / DSM 7210 / GS-15)).